Reading from the N-terminus, the 3974-residue chain is Hybrid PKS-NRPS synthetase 1 (3974 aa).

The Ketosynthase family 3 (KS3) domain maps to 5–442 (SQKIAIIGSA…GTNAHCLIES (438 aa)). Catalysis depends on for beta-ketoacyl synthase activity residues Cys-179, His-316, and His-362. The malonyl-CoA:ACP transacylase (MAT) domain stretch occupies residues 561–883 (IFTGQGAQWA…TGILERGLDD (323 aa)). Positions 954–1079 (HPLLGSRLSA…HDSELGIPES (126 aa)) are N-terminal hotdog fold. Positions 954-1251 (HPLLGSRLSA…QVESVKLVPV (298 aa)) are dehydratase (DH) domain. Positions 954 to 1257 (HPLLGSRLSA…LVPVITPDAS (304 aa)) constitute a PKS/mFAS DH domain. His-986 acts as the Proton acceptor; for dehydratase activity in catalysis. The C-terminal hotdog fold stretch occupies residues 1107-1257 (TTPISSAKIY…LVPVITPDAS (151 aa)). Asp-1165 serves as the catalytic Proton donor; for dehydratase activity. The interval 1398 to 1529 (PWNTELRNAI…GYLLLVAKTG (132 aa)) is methyltransferase (MT) domain. The interval 2108 to 2282 (TYFLAGMTDS…ASIMDTGVVT (175 aa)) is ketoreductase (KR) domain. Positions 2492–2516 (AGRSASPGASCSDRSLSTRSDETRS) are disordered. The span at 2498–2509 (PGASCSDRSLST) shows a compositional bias: polar residues. Residues 2560 to 2994 (APLSPGQAQL…LERLRTSSDQ (435 aa)) form a condensation (C) domain region. The segment at 3021–3423 (DAMAEKYFDQ…DGSLILLGRM (403 aa)) is adenylation (A) (KR) domain. A Carrier domain is found at 3537–3613 (SADQLVEAEV…EMAEKMASVR (77 aa)). Ser-3573 bears the O-(pantetheine 4'-phosphoryl)serine mark. The interval 3657–3940 (VVLTGAADLL…KLEMGEWIAL (284 aa)) is reductase (RED) domain.

In the C-terminal section; belongs to the NRP synthetase family.

It functions in the pathway secondary metabolite biosynthesis. Hybrid PKS-NRPS synthetase; part of the hps1-dma1 gene cluster that probably mediates the biosynthesis a derivative of cyclopiazonic acid (CPA). The hybrid polyketide synthase-nonribosomal peptide synthetase (PKS-NRPS) nps1 might incorporates acetyl-CoA, malonyl-CoA, and tryptophan (Trp) and utilizes a C-terminal redox-incompetent reductase domain to make and release the tryptophan tetramic acid, cyclo-acetoacetyl-L-tryptophan (c-AATrp), as the first intermediate in the pathway. In addition, the cluster also includes the tryptophan dimethylallyltransferase dma1, the FAD-dependent oxidoreductase toxD, the cytochrome P450 monooxygenase cyp3.1 and the methyltransferase DOTSEDRAFT_139328; the latter 2 being not present in all CPA-producing fungi but involved in additional modifications that occur in biosynthesis the of a range of CPA and CPA-like products. Further studies are required to clarify whether the CPA-like hps1-dma1 cluster is functional or a non-functional relic reflecting evolution of D.septosporum. In Dothistroma septosporum (strain NZE10 / CBS 128990) (Red band needle blight fungus), this protein is Hybrid PKS-NRPS synthetase 1.